The chain runs to 163 residues: Transcriptional repressor NrdR (163 aa).

Residues 3–34 (CPSCNSESSRVVDSRSIEMGVSIRRRRECSEC) fold into a zinc finger. An ATP-cone domain is found at 46–136 (LLVVKRNGVT…VYKSFNCAED (91 aa)).

The protein belongs to the NrdR family. It depends on Zn(2+) as a cofactor.

Functionally, negatively regulates transcription of bacterial ribonucleotide reductase nrd genes and operons by binding to NrdR-boxes. In Corynebacterium jeikeium (strain K411), this protein is Transcriptional repressor NrdR.